The following is a 291-amino-acid chain: MLDNIKIGLQYCTPKHALTRLVGKLASLEAGKLTTAIIRWFIGQYKVDMSEARNPDPAAYSTFNHFFIRELKEGARPINNDDNIISHPADACVSQLGPIKEGRLFQAKGHYFDACELLGGDKALAEEFVDGDFATLYLSPRDYHRVHMPCDGTLRQMIYVPGDLFSVNPLTAQNVPNLFARNERVVCIFDTAHGPIAQVLVGATIVGSIETVWAGTVTPPTGPEVRRWDYPATGTQAIVLKKGQEMGRFKLGSTVINLFPKDMVRFVEAMKPEQPTRMGEPYAELDSSEKE.

Catalysis depends on charge relay system; for autoendoproteolytic cleavage activity residues aspartate 90, histidine 147, and serine 253. Serine 253 acts as the Schiff-base intermediate with substrate; via pyruvic acid; for decarboxylase activity in catalysis. A Pyruvic acid (Ser); by autocatalysis modification is found at serine 253.

The protein belongs to the phosphatidylserine decarboxylase family. PSD-B subfamily. Prokaryotic type I sub-subfamily. In terms of assembly, heterodimer of a large membrane-associated beta subunit and a small pyruvoyl-containing alpha subunit. Pyruvate serves as cofactor. Is synthesized initially as an inactive proenzyme. Formation of the active enzyme involves a self-maturation process in which the active site pyruvoyl group is generated from an internal serine residue via an autocatalytic post-translational modification. Two non-identical subunits are generated from the proenzyme in this reaction, and the pyruvate is formed at the N-terminus of the alpha chain, which is derived from the carboxyl end of the proenzyme. The autoendoproteolytic cleavage occurs by a canonical serine protease mechanism, in which the side chain hydroxyl group of the serine supplies its oxygen atom to form the C-terminus of the beta chain, while the remainder of the serine residue undergoes an oxidative deamination to produce ammonia and the pyruvoyl prosthetic group on the alpha chain. During this reaction, the Ser that is part of the protease active site of the proenzyme becomes the pyruvoyl prosthetic group, which constitutes an essential element of the active site of the mature decarboxylase.

Its subcellular location is the cell membrane. It catalyses the reaction a 1,2-diacyl-sn-glycero-3-phospho-L-serine + H(+) = a 1,2-diacyl-sn-glycero-3-phosphoethanolamine + CO2. The protein operates within phospholipid metabolism; phosphatidylethanolamine biosynthesis; phosphatidylethanolamine from CDP-diacylglycerol: step 2/2. In terms of biological role, catalyzes the formation of phosphatidylethanolamine (PtdEtn) from phosphatidylserine (PtdSer). This is Phosphatidylserine decarboxylase proenzyme from Photobacterium profundum (strain SS9).